The chain runs to 964 residues: Activator of stress genes 1 (964 aa).

Positions 21–47 form a DNA-binding region, zn(2)-C6 fungal-type; it reads CDECRKKKVKCDGQQPCIHCTVYSYEC. The interval 104–125 is disordered; it reads ASTIPASNNPSKPRKYKTKSTR. S166 is modified (phosphoserine; by ATM or ATR). S186 is subject to Phosphoserine. 3 stretches are compositionally biased toward polar residues: residues 190-201, 209-225, and 733-759; these read PVLSSNSKNSTP, KSDS…DSVD, and NNTP…TNMS. Disordered stretches follow at residues 190-225, 733-764, and 800-900; these read PVLS…DSVD, NNTP…ERDP, and NSAF…SPSY. Positions 800–896 are enriched in low complexity; it reads NSAFDFSSSK…NDFGIKIDNN (97 aa). S963 is subject to Phosphoserine.

This sequence belongs to the ASG1 family.

It is found in the nucleus. Functionally, probable transcription factor involved in the stress response. This Saccharomyces cerevisiae (strain ATCC 204508 / S288c) (Baker's yeast) protein is Activator of stress genes 1 (ASG1).